Reading from the N-terminus, the 176-residue chain is 3-hydroxydecanoyl-[acyl-carrier-protein] dehydratase (176 aa).

Residue His75 is part of the active site.

The protein belongs to the thioester dehydratase family. FabA subfamily. Homodimer.

Its subcellular location is the cytoplasm. It carries out the reaction a (3R)-hydroxyacyl-[ACP] = a (2E)-enoyl-[ACP] + H2O. The enzyme catalyses (3R)-hydroxydecanoyl-[ACP] = (2E)-decenoyl-[ACP] + H2O. It catalyses the reaction (2E)-decenoyl-[ACP] = (3Z)-decenoyl-[ACP]. It participates in lipid metabolism; fatty acid biosynthesis. In terms of biological role, necessary for the introduction of cis unsaturation into fatty acids. Catalyzes the dehydration of (3R)-3-hydroxydecanoyl-ACP to E-(2)-decenoyl-ACP and then its isomerization to Z-(3)-decenoyl-ACP. Can catalyze the dehydratase reaction for beta-hydroxyacyl-ACPs with saturated chain lengths up to 16:0, being most active on intermediate chain length. This chain is 3-hydroxydecanoyl-[acyl-carrier-protein] dehydratase, found in Actinobacillus pleuropneumoniae serotype 5b (strain L20).